The following is a 209-amino-acid chain: Claudin-4 (209 aa).

Over 1-9 (MASMGLQVT) the chain is Cytoplasmic. The interval 1–103 (MASMGLQVTG…GVLLSVVGGK (103 aa)) is interaction with EPHA2. Residues 10-30 (GIALAVLGWLAVMLCCALPMW) traverse the membrane as a helical segment. Residues 31–81 (RVTAFIGSNIVTSQTIWEGLWMNCVVQSTGQMQCKVYDSLLALPQDLQAAR) lie on the Extracellular side of the membrane. C54 and C64 are joined by a disulfide. Residues 82–102 (ALVIISIIVAALGVLLSVVGG) form a helical membrane-spanning segment. At 103 to 117 (KCTNCLEDESAKAKT) the chain is on the cytoplasmic side. Residues 118-138 (MIVAGVVFLLAGLLVIVPVSW) form a helical membrane-spanning segment. Residues 139–160 (TAHNIIQDFYNPLVASGQKREM) lie on the Extracellular side of the membrane. Residues 161–181 (GASLYVGWAASGLLLLGGGLL) form a helical membrane-spanning segment. The Cytoplasmic segment spans residues 182 to 209 (CCNCPPRTDKPYSAKYSAARSAAASNYV). A Phosphotyrosine; by EPHA2 modification is found at Y208. The segment at 208-209 (YV) is interactions with TJP1, TJP2 and TJP3.

The protein belongs to the claudin family. As to quaternary structure, interacts with EPHA2; phosphorylates CLDN4 and may regulate tight junctions. Directly interacts with TJP1/ZO-1, TJP2/ZO-2 and TJP3/ZO-3. Interacts with CLDN1. Interacts with CLDN8. In terms of processing, phosphorylated. Phosphorylation by EPHA2 is stimulated by EFNA1 and alters interaction with TJP1.

Its subcellular location is the cell junction. It localises to the tight junction. The protein localises to the cell membrane. Its function is as follows. Channel-forming tight junction protein that mediates paracellular chloride transport in the kidney. Plays a critical role in the paracellular reabsorption of filtered chloride in the kidney collecting ducts. Claudins play a major role in tight junction-specific obliteration of the intercellular space, through calcium-independent cell-adhesion activity. The polypeptide is Claudin-4 (CLDN4) (Chlorocebus aethiops (Green monkey)).